Here is a 123-residue protein sequence, read N- to C-terminus: uncharacterized protein (123 aa).

It to M.tuberculosis Rv0477.

This is an uncharacterized protein from Mycobacterium leprae (strain TN).